The sequence spans 436 residues: Enolase (436 aa).

(2R)-2-phosphoglycerate is bound at residue Gln-163. The Proton donor role is filled by Glu-205. Positions 242, 285, and 312 each coordinate Mg(2+). (2R)-2-phosphoglycerate contacts are provided by Lys-337, Arg-366, Ser-367, and Lys-388. Lys-337 (proton acceptor) is an active-site residue.

This sequence belongs to the enolase family. Mg(2+) is required as a cofactor.

It localises to the cytoplasm. It is found in the secreted. The protein localises to the cell surface. The catalysed reaction is (2R)-2-phosphoglycerate = phosphoenolpyruvate + H2O. It functions in the pathway carbohydrate degradation; glycolysis; pyruvate from D-glyceraldehyde 3-phosphate: step 4/5. Catalyzes the reversible conversion of 2-phosphoglycerate (2-PG) into phosphoenolpyruvate (PEP). It is essential for the degradation of carbohydrates via glycolysis. The polypeptide is Enolase (Solidesulfovibrio magneticus (strain ATCC 700980 / DSM 13731 / RS-1) (Desulfovibrio magneticus)).